We begin with the raw amino-acid sequence, 157 residues long: 2-C-methyl-D-erythritol 2,4-cyclodiphosphate synthase (157 aa).

Residues Asp-9 and His-11 each coordinate a divalent metal cation. 4-CDP-2-C-methyl-D-erythritol 2-phosphate contacts are provided by residues 9–11 (DVH) and 35–36 (HS). His-43 contacts a divalent metal cation. 4-CDP-2-C-methyl-D-erythritol 2-phosphate is bound by residues 57–59 (DIG), 62–66 (FPDTD), 101–107 (AEKPKMA), 133–136 (TTTE), Phe-140, and Arg-143.

The protein belongs to the IspF family. Homotrimer. A divalent metal cation serves as cofactor.

It catalyses the reaction 4-CDP-2-C-methyl-D-erythritol 2-phosphate = 2-C-methyl-D-erythritol 2,4-cyclic diphosphate + CMP. Its pathway is isoprenoid biosynthesis; isopentenyl diphosphate biosynthesis via DXP pathway; isopentenyl diphosphate from 1-deoxy-D-xylulose 5-phosphate: step 4/6. Functionally, involved in the biosynthesis of isopentenyl diphosphate (IPP) and dimethylallyl diphosphate (DMAPP), two major building blocks of isoprenoid compounds. Catalyzes the conversion of 4-diphosphocytidyl-2-C-methyl-D-erythritol 2-phosphate (CDP-ME2P) to 2-C-methyl-D-erythritol 2,4-cyclodiphosphate (ME-CPP) with a corresponding release of cytidine 5-monophosphate (CMP). The chain is 2-C-methyl-D-erythritol 2,4-cyclodiphosphate synthase from Listeria monocytogenes serovar 1/2a (strain ATCC BAA-679 / EGD-e).